The sequence spans 418 residues: tRNA-2-methylthio-N(6)-dimethylallyladenosine synthase (418 aa).

One can recognise an MTTase N-terminal domain in the interval Pro2–Leu118. The [4Fe-4S] cluster site is built by Cys11, Cys47, Cys81, Cys134, Cys138, and Cys141. Residues Leu120–Lys351 enclose the Radical SAM core domain. One can recognise a TRAM domain in the interval Lys346 to Asn414.

This sequence belongs to the methylthiotransferase family. MiaB subfamily. Monomer. [4Fe-4S] cluster serves as cofactor.

Its subcellular location is the cytoplasm. The catalysed reaction is N(6)-dimethylallyladenosine(37) in tRNA + (sulfur carrier)-SH + AH2 + 2 S-adenosyl-L-methionine = 2-methylsulfanyl-N(6)-dimethylallyladenosine(37) in tRNA + (sulfur carrier)-H + 5'-deoxyadenosine + L-methionine + A + S-adenosyl-L-homocysteine + 2 H(+). In terms of biological role, catalyzes the methylthiolation of N6-(dimethylallyl)adenosine (i(6)A), leading to the formation of 2-methylthio-N6-(dimethylallyl)adenosine (ms(2)i(6)A) at position 37 in tRNAs that read codons beginning with uridine. This is tRNA-2-methylthio-N(6)-dimethylallyladenosine synthase from Dehalococcoides mccartyi (strain ATCC BAA-2100 / JCM 16839 / KCTC 5957 / BAV1).